The following is a 740-amino-acid chain: Ribosomal protein S6 kinase alpha-6 (740 aa).

The Protein kinase 1 domain occupies 67-326 (FELLKVLGQG…VEEIKRHTFF (260 aa)). ATP contacts are provided by residues 73-81 (LGQGSFGKV) and K99. D192 (proton acceptor) is an active-site residue. Positions 327-396 (STIDWNKLYR…VAPVSLEESK (70 aa)) constitute an AGC-kinase C-terminal domain. One can recognise a Protein kinase 2 domain in the interval 420–677 (YELKEDIGVG…AEQVLKHSWI (258 aa)). ATP is bound by residues 426–434 (IGVGSYSIC) and K449. D537 functions as the Proton acceptor in the catalytic mechanism.

This sequence belongs to the protein kinase superfamily. AGC Ser/Thr protein kinase family. S6 kinase subfamily. As to quaternary structure, forms a complex with either ERK1 or ERK2 in quiescent cells. Transiently dissociates following mitogenic stimulation. Mg(2+) is required as a cofactor.

It catalyses the reaction L-seryl-[protein] + ATP = O-phospho-L-seryl-[protein] + ADP + H(+). It carries out the reaction L-threonyl-[protein] + ATP = O-phospho-L-threonyl-[protein] + ADP + H(+). Activated by multiple phosphorylations on threonine and serine residues. In terms of biological role, serine/threonine kinase that may play a role in mediating the growth-factor and stress induced activation of the transcription factor CREB. In Danio rerio (Zebrafish), this protein is Ribosomal protein S6 kinase alpha-6 (rps6ka6).